The chain runs to 360 residues: tRNA (guanine(9)-N1)-methyltransferase (360 aa).

Residues Met-1–Glu-77 form a disordered region. Basic and acidic residues-rich tracts occupy residues Gln-8–Arg-24 and Met-33–Lys-55. Residues Gln-56–Glu-67 show a composition bias toward basic residues. The span at Arg-68 to Glu-77 shows a compositional bias: basic and acidic residues. One can recognise an SAM-dependent MTase TRM10-type domain in the interval Arg-94–Gly-293. Residues Leu-199–Thr-200, Gly-219, Asp-223–Tyr-227, Cys-231, Leu-245, and Gln-257–Leu-259 contribute to the S-adenosyl-L-methionine site. Asp-223 serves as the catalytic Proton acceptor. The interval Val-291 to His-360 is disordered. The span at His-297–Glu-306 shows a compositional bias: basic and acidic residues. Positions Pro-307–Val-324 are enriched in low complexity. Over residues Gln-328–Leu-343 the composition is skewed to polar residues.

The protein belongs to the class IV-like SAM-binding methyltransferase superfamily. TRM10 family. In terms of assembly, monomer.

The protein resides in the cytoplasm. It is found in the nucleus. It catalyses the reaction guanosine(9) in tRNA + S-adenosyl-L-methionine = N(1)-methylguanosine(9) in tRNA + S-adenosyl-L-homocysteine + H(+). Its function is as follows. S-adenosyl-L-methionine-dependent guanine N(1)-methyltransferase that catalyzes the formation of N(1)-methylguanine at position 9 (m1G9) in cytoplasmic tRNA. The polypeptide is tRNA (guanine(9)-N1)-methyltransferase (Debaryomyces hansenii (strain ATCC 36239 / CBS 767 / BCRC 21394 / JCM 1990 / NBRC 0083 / IGC 2968) (Yeast)).